We begin with the raw amino-acid sequence, 312 residues long: Methionyl-tRNA formyltransferase (312 aa).

Residue 109-112 (SLLP) coordinates (6S)-5,6,7,8-tetrahydrofolate.

Belongs to the Fmt family.

It catalyses the reaction L-methionyl-tRNA(fMet) + (6R)-10-formyltetrahydrofolate = N-formyl-L-methionyl-tRNA(fMet) + (6S)-5,6,7,8-tetrahydrofolate + H(+). In terms of biological role, attaches a formyl group to the free amino group of methionyl-tRNA(fMet). The formyl group appears to play a dual role in the initiator identity of N-formylmethionyl-tRNA by promoting its recognition by IF2 and preventing the misappropriation of this tRNA by the elongation apparatus. This is Methionyl-tRNA formyltransferase from Nitrosospira multiformis (strain ATCC 25196 / NCIMB 11849 / C 71).